The following is a 458-amino-acid chain: Probable M18 family aminopeptidase 1 (458 aa).

3 residues coordinate Zn(2+): H95, H170, and H434.

Belongs to the peptidase M18 family. Zn(2+) serves as cofactor.

The chain is Probable M18 family aminopeptidase 1 from Borreliella afzelii (strain PKo) (Borrelia afzelii).